The sequence spans 86 residues: F(1)-ATPase inhibitor STF1, mitochondrial (86 aa).

The N-terminal 23 residues, 1 to 23 (MLNRCISRNTRLPVNLRIASRFY), are a transit peptide targeting the mitochondrion. At serine 24 the chain carries Phosphoserine.

The protein belongs to the ATPase inhibitor family. As to quaternary structure, monomer and homodimer. Monomeric at pH 5.0 and dimeric at either pH 6.5 or 8.0. The protein aggregates increasingly strongly with increasing pH.

Its subcellular location is the mitochondrion. Endogenous low-affinity ATPase inhibitor, which inhibits specifically the reverse ATPase reaction of mitochondrial F(1)F(0)-type ATP synthase. Found to stabilize, together with STF2, a complex of intrinsic ATPase inhibitor INH1 and proton-translocating ATPase in mitochondrial membranes. Binds directly to purified F1-ATPase. This Saccharomyces cerevisiae (strain ATCC 204508 / S288c) (Baker's yeast) protein is F(1)-ATPase inhibitor STF1, mitochondrial (STF1).